The sequence spans 142 residues: Putative FK506-binding protein 9-like protein (142 aa).

The PPIase FKBP-type domain maps to 1–49 (MDMGLREMCVGEKRTVIIPPHLGYGEAGVDGEVPGSAVLVFDIELLELV). 2 consecutive EF-hand domains span residues 60-95 (WNGE…QVAS) and 105-140 (DAEL…AKQD). Ca(2+) is bound by residues Asp-118, Asn-120, Asp-122, Lys-124, and Glu-129.

This Homo sapiens (Human) protein is Putative FK506-binding protein 9-like protein (FKBP9P1).